Here is a 1385-residue protein sequence, read N- to C-terminus: Kinesin-like protein KIF15 (1385 aa).

A disordered region spans residues 1 to 24; sequence MAPGCKSELRNVTNSHSNQPSNED. Residues 10-21 are compositionally biased toward polar residues; sequence RNVTNSHSNQPS. One can recognise a Kinesin motor domain in the interval 26–363; it reads AIKVFVRIRP…LNFAQRAKLI (338 aa). 109-116 lines the ATP pocket; the sequence is GQTGSGKT. Residues 368–1385 are a coiled coil; it reads VVNEDTQGNV…NVFLKERKKE (1018 aa). Residue lysine 1007 is modified to N6-acetyllysine. 2 positions are modified to phosphoserine: serine 1139 and serine 1167. Residues 1222-1243 form a disordered region; sequence DMKRQGESSSQSRPDSQQLKNE. Over residues 1228-1241 the composition is skewed to polar residues; sequence ESSSQSRPDSQQLK.

It belongs to the TRAFAC class myosin-kinesin ATPase superfamily. Kinesin family. KLP2 subfamily. Interacts with MKI67 and TPX2. In terms of tissue distribution, expressed in sympathetic neurons.

It is found in the cytoplasm. Its subcellular location is the cytoskeleton. The protein resides in the spindle. Plus-end directed kinesin-like motor enzyme involved in mitotic spindle assembly. The polypeptide is Kinesin-like protein KIF15 (Kif15) (Rattus norvegicus (Rat)).